A 284-amino-acid polypeptide reads, in one-letter code: Nucleotide-binding protein NMCC_0698 (284 aa).

8–15 (GLSGSGKS) is an ATP binding site. Residue 58 to 61 (DVRS) coordinates GTP.

Belongs to the RapZ-like family.

Displays ATPase and GTPase activities. This is Nucleotide-binding protein NMCC_0698 from Neisseria meningitidis serogroup C (strain 053442).